Consider the following 222-residue polypeptide: Probable transcriptional regulator ycf29 (222 aa).

The 117-residue stretch at 4–120 (KLMLVENDIV…ELLSIINNLI (117 aa)) folds into the Response regulatory domain. Residue Asp-53 is modified to 4-aspartylphosphate. Positions 139–204 (QLNHKIRLTP…LLVKYSINNN (66 aa)) constitute an HTH luxR-type domain. A DNA-binding region (H-T-H motif) is located at residues 163 to 182 (NKEISTILNTSVRNVEKYVS).

Its subcellular location is the plastid. The protein localises to the chloroplast. In Pyropia yezoensis (Susabi-nori), this protein is Probable transcriptional regulator ycf29 (ycf29).